The sequence spans 507 residues: Hippocampus abundant transcript-like protein 1 (507 aa).

The disordered stretch occupies residues 1–27 (MSTDGESPEEPRWKAVASPKASTMPEK). At 1–51 (MSTDGESPEEPRWKAVASPKASTMPEKRGSAQAASGSWLQGFGHPSVYHAA) the chain is on the extracellular side. The helical transmembrane segment at 52 to 72 (FVIFLEFFAWGLLTTPMLTVL) threads the bilayer. Topologically, residues 73 to 84 (HETFPQHTFLMN) are cytoplasmic. A helical membrane pass occupies residues 85-105 (GLIQGVKGLLSFLSAPLIGAL). The Extracellular segment spans residues 106–113 (SDVWGRKP). The chain crosses the membrane as a helical span at residues 114–134 (FLLGTVFFTCFPIPLMRINPW). Topologically, residues 135 to 136 (WY) are cytoplasmic. Residues 137 to 157 (FGMISVSGVFSVTFSVIFAYV) traverse the membrane as a helical segment. Residues 158–170 (ADFTQEHERSTAY) are Extracellular-facing. Residues 171–191 (GWVSATFAASLVSSPAIGTYL) traverse the membrane as a helical segment. Over 192–198 (SANYGDS) the chain is Cytoplasmic. A helical membrane pass occupies residues 199-219 (LVVLVATLVALLDICFILIAV). Topologically, residues 220-257 (PESLSEKIRPASWGAQISWKQADPFASLKKVGKDSTVL) are extracellular. A helical membrane pass occupies residues 258-278 (LICITVFLSYLPEAGQYSSFF). Residues 279–283 (LYLRQ) lie on the Cytoplasmic side of the membrane. A helical transmembrane segment spans residues 284-304 (VIGFGSVKIVAFIAMVGILSI). The Extracellular portion of the chain corresponds to 305–323 (VAQTVFLSKLMRSLGNKNT). Residues 324–344 (VLLGLGFQMLQLAWYGFGSQA) form a helical membrane-spanning segment. At 345 to 347 (WMM) the chain is on the cytoplasmic side. A helical membrane pass occupies residues 348–368 (WAAGTVAAMSSITFPAVSALI). Topologically, residues 369 to 389 (SRNAESDQQGVAQGIVTGIRG) are extracellular. Residues 390 to 410 (LCNGLGPALYGFIFYMFHVEL) traverse the membrane as a helical segment. The Cytoplasmic segment spans residues 411 to 430 (SELGPKLNSDDDPLQGAFIP). The helical transmembrane segment at 431 to 451 (GPPFLFGACIVLMSFLVALFI) threads the bilayer. Over 452 to 507 (PEYRKTSGVQKHNNSTSGSLSTPPERGSDEDIEPLLQDSSIWELSFEEPGNQCTEL) the chain is Extracellular. The segment covering 459–473 (GVQKHNNSTSGSLST) has biased composition (polar residues). The interval 459–483 (GVQKHNNSTSGSLSTPPERGSDEDI) is disordered. Asn-464 and Asn-465 each carry an N-linked (GlcNAc...) asparagine glycan.

Belongs to the major facilitator superfamily.

Its subcellular location is the membrane. This is Hippocampus abundant transcript-like protein 1 from Mus musculus (Mouse).